We begin with the raw amino-acid sequence, 733 residues long: Acyl-coenzyme A oxidase (733 aa).

It belongs to the acyl-CoA oxidase family. It depends on FAD as a cofactor.

It localises to the peroxisome. The catalysed reaction is a 2,3-saturated acyl-CoA + O2 = a (2E)-enoyl-CoA + H2O2. The protein operates within lipid metabolism; peroxisomal fatty acid beta-oxidation. This is Acyl-coenzyme A oxidase (POX1) from Eremothecium gossypii (strain ATCC 10895 / CBS 109.51 / FGSC 9923 / NRRL Y-1056) (Yeast).